A 179-amino-acid polypeptide reads, in one-letter code: Transcriptional regulator ICP22 homolog (179 aa).

A compositionally biased stretch (basic and acidic residues) spans 1–12; it reads MSRDRDRARPDT. The interval 1-40 is disordered; the sequence is MSRDRDRARPDTRLSSSDNESDDEDYQLPHSHPEYGSDSS.

It belongs to the herpesviridae ICP22 family.

The polypeptide is Transcriptional regulator ICP22 homolog (MDV088) (Gallid herpesvirus 2 (strain Chicken/Md5/ATCC VR-987) (GaHV-2)).